Here is a 121-residue protein sequence, read N- to C-terminus: Oxalate-binding protein (121 aa).

Residues 49–117 (RMKLPPGSSV…GNTDLEFLAV (69 aa)) form the Cupin type-2 domain. Residues His61, His63, and Glu68 each coordinate Mn(2+). Tyr70 contacts oxalate. Residue His102 coordinates Mn(2+).

Homodimer.

In terms of biological role, binds oxalate. This Thermotoga maritima (strain ATCC 43589 / DSM 3109 / JCM 10099 / NBRC 100826 / MSB8) protein is Oxalate-binding protein.